The following is a 489-amino-acid chain: Aklavinone 12-hydroxylase DnrF (489 aa).

FAD-binding positions include 17 to 18, Glu37, Gln121, and Leu145; that span reads LG. Tyr224 acts as the Proton acceptor in catalysis. Asp308 serves as a coordination point for FAD. Residue Gly317 participates in aklavinone binding. Disordered stretches follow at residues 402 to 428 and 455 to 489; these read VAAEDDDPEPTEDPRRPSGRPGFRAPH and EGGAWPGRPPAPPRIWASASTSISSAAMSPPPPAN. The segment covering 468-482 has biased composition (low complexity); the sequence is RIWASASTSISSAAM.

It belongs to the PheA/TfdB FAD monooxygenase family. In terms of assembly, monomer. Requires FAD as cofactor.

The enzyme catalyses aklavinone + NADPH + O2 + H(+) = epsilon-rhodomycinone + NADP(+) + H2O. Its pathway is antibiotic biosynthesis; daunorubicin biosynthesis. It participates in antibiotic biosynthesis; carminomycin biosynthesis. The protein operates within antibiotic biosynthesis; rhodomycin biosynthesis. In terms of biological role, involved in the biosynthesis of the anthracyclines carminomycin, rhodomycin and daunorubicin (daunomycin) which are aromatic polyketide antibiotics that exhibit high cytotoxicity and are widely applied in the chemotherapy of a variety of cancers. Catalyzes the incorporation of a hydroxyl group at position C-11 of aklavinone, resulting in epsilon-rhodomycinone. It cannot accept substrates glycosylated at position C-7. It can also hydroxylate 11-deoxycarminomycinone and can use both NAD or NADP. The polypeptide is Aklavinone 12-hydroxylase DnrF (dnrF) (Streptomyces peucetius).